Here is an 82-residue protein sequence, read N- to C-terminus: ATP synthase subunit c, chloroplastic (82 aa).

2 helical membrane-spanning segments follow: residues 3 to 23 (PIIS…AAIG) and 57 to 77 (LAFM…LLFA).

Belongs to the ATPase C chain family. As to quaternary structure, F-type ATPases have 2 components, F(1) - the catalytic core - and F(0) - the membrane proton channel. F(1) has five subunits: alpha(3), beta(3), gamma(1), delta(1), epsilon(1). F(0) has four main subunits: a(1), b(1), b'(1) and c(10-14). The alpha and beta chains form an alternating ring which encloses part of the gamma chain. F(1) is attached to F(0) by a central stalk formed by the gamma and epsilon chains, while a peripheral stalk is formed by the delta, b and b' chains.

Its subcellular location is the plastid. The protein resides in the chloroplast thylakoid membrane. In terms of biological role, f(1)F(0) ATP synthase produces ATP from ADP in the presence of a proton or sodium gradient. F-type ATPases consist of two structural domains, F(1) containing the extramembraneous catalytic core and F(0) containing the membrane proton channel, linked together by a central stalk and a peripheral stalk. During catalysis, ATP synthesis in the catalytic domain of F(1) is coupled via a rotary mechanism of the central stalk subunits to proton translocation. Functionally, key component of the F(0) channel; it plays a direct role in translocation across the membrane. A homomeric c-ring of between 10-14 subunits forms the central stalk rotor element with the F(1) delta and epsilon subunits. The polypeptide is ATP synthase subunit c, chloroplastic (Cyanidium caldarium (Red alga)).